The primary structure comprises 141 residues: Large ribosomal subunit protein uL11 (141 aa).

Belongs to the universal ribosomal protein uL11 family. Part of the ribosomal stalk of the 50S ribosomal subunit. Interacts with L10 and the large rRNA to form the base of the stalk. L10 forms an elongated spine to which L12 dimers bind in a sequential fashion forming a multimeric L10(L12)X complex. In terms of processing, one or more lysine residues are methylated.

Functionally, forms part of the ribosomal stalk which helps the ribosome interact with GTP-bound translation factors. This Campylobacter jejuni subsp. jejuni serotype O:6 (strain 81116 / NCTC 11828) protein is Large ribosomal subunit protein uL11.